The following is a 164-amino-acid chain: MSQKRLSRVIYPGTFDPITNGHLDLIERAAQMFDEVIIAVAASPSKNTLFTLEERVEFARQVTSHLDNVSAKGFSGLLVDFAKAEKANVLIRGLRTTVDFEYEFGLTNMYRRLMPGLESVFLTPAEEHAFISSTLVREVAIHGGNVDEFVPAIVANALHQKKKI.

Thr14 lines the substrate pocket. ATP-binding positions include 14–15 and His22; that span reads TF. Substrate contacts are provided by Lys46, Leu78, and Arg92. ATP-binding positions include 93 to 95, Glu103, and 128 to 134; these read GLR and HAFISST.

Belongs to the bacterial CoaD family. Homohexamer. Mg(2+) is required as a cofactor.

The protein resides in the cytoplasm. It carries out the reaction (R)-4'-phosphopantetheine + ATP + H(+) = 3'-dephospho-CoA + diphosphate. The protein operates within cofactor biosynthesis; coenzyme A biosynthesis; CoA from (R)-pantothenate: step 4/5. Functionally, reversibly transfers an adenylyl group from ATP to 4'-phosphopantetheine, yielding dephospho-CoA (dPCoA) and pyrophosphate. In Vibrio cholerae serotype O1 (strain ATCC 39541 / Classical Ogawa 395 / O395), this protein is Phosphopantetheine adenylyltransferase.